The primary structure comprises 233 residues: MKHNLNAHEARVIGCLLEKQVTTPEQYPMSLNGLTLACNQKTSRDPVMELSESQVQQTLDFLLKKHLIRSQSGNRVMKYEHRFCNSEFGDLKFSPAEVAVITLLLLRGAQTPGELRTRTNRMYEFADVAETEETLKTLSLREDGPFVVRLAREPGKRESRFMPLFSGDVASSLLAAGEAEEDNHTLEANPRETHSFENIALEKTALEARVAQLEQQVIQLSRRLDDVLIQLDD.

The protein belongs to the UPF0502 family.

This chain is UPF0502 protein YPTS_2082, found in Yersinia pseudotuberculosis serotype IB (strain PB1/+).